Reading from the N-terminus, the 488-residue chain is Rhamnulokinase (488 aa).

13–17 (ASSGR) lines the ATP pocket. Cys-68 and Cys-222 are oxidised to a cystine. Residues Gly-83 and 236–238 (HDT) contribute to the substrate site. Asp-237 (proton acceptor) is an active-site residue. Thr-259 serves as a coordination point for ATP. Asn-296 contributes to the substrate binding site. Gln-304 lines the ATP pocket. An intrachain disulfide couples Cys-353 to Cys-370. Gly-402 provides a ligand contact to ATP. A disulfide bridge connects residues Cys-413 and Cys-417.

The protein belongs to the rhamnulokinase family. Mg(2+) serves as cofactor.

It catalyses the reaction L-rhamnulose + ATP = L-rhamnulose 1-phosphate + ADP + H(+). Its pathway is carbohydrate degradation; L-rhamnose degradation; glycerone phosphate from L-rhamnose: step 2/3. Functionally, involved in the catabolism of L-rhamnose (6-deoxy-L-mannose). Catalyzes the transfer of the gamma-phosphate group from ATP to the 1-hydroxyl group of L-rhamnulose to yield L-rhamnulose 1-phosphate. The polypeptide is Rhamnulokinase (Klebsiella pneumoniae (strain 342)).